We begin with the raw amino-acid sequence, 430 residues long: Transcriptional regulatory protein RXT2 (430 aa).

The disordered stretch occupies residues 408–430 (EIENTMEDGVVDDNEPDEEANRA).

This sequence belongs to the RXT2 family. Component of the RPD3C(L) complex composed of at least ASH1, CTI6, DEP1, PHO23, RPD3, RXT2, RXT3, SAP30, SDS3, SIN3, UME1 and UME6.

The protein resides in the nucleus. Its function is as follows. Component of the RPD3C(L) histone deacetylase complex (HDAC) responsible for the deacetylation of lysine residues on the N-terminal part of the core histones (H2A, H2B, H3 and H4). Histone deacetylation gives a tag for epigenetic repression and plays an important role in transcriptional regulation, cell cycle progression and developmental events. The polypeptide is Transcriptional regulatory protein RXT2 (RXT2) (Saccharomyces cerevisiae (strain ATCC 204508 / S288c) (Baker's yeast)).